A 152-amino-acid chain; its full sequence is Small ribosomal subunit protein uS15 (152 aa).

The protein belongs to the universal ribosomal protein uS15 family. Part of the 30S ribosomal subunit.

This Methanospirillum hungatei JF-1 (strain ATCC 27890 / DSM 864 / NBRC 100397 / JF-1) protein is Small ribosomal subunit protein uS15.